Reading from the N-terminus, the 288-residue chain is Polyketide biosynthesis malonyl CoA-acyl carrier protein transacylase PksC (288 aa).

Catalysis depends on residues Ser87 and His193.

It belongs to the FabD family.

The protein localises to the cytoplasm. It catalyses the reaction holo-[ACP] + malonyl-CoA = malonyl-[ACP] + CoA. The protein operates within antibiotic biosynthesis; bacillaene biosynthesis. Its function is as follows. Involved in some intermediate steps for the synthesis of the antibiotic polyketide bacillaene which is involved in secondary metabolism. It catalyzes the transfer of the malonyl-CoA group to the acyl-carrier-protein AcpK (Mal-AcpK). This Bacillus subtilis (strain 168) protein is Polyketide biosynthesis malonyl CoA-acyl carrier protein transacylase PksC (pksC).